The primary structure comprises 602 residues: Exo-poly-alpha-D-galacturonosidase (602 aa).

Positions 1 to 27 (MKVITFSRRSALASIVATCLMSTPALA) are cleaved as a signal peptide. The 118-residue stretch at 32-149 (APQKLQIPTL…TVTTTTTAVP (118 aa)) folds into the Fibronectin type-III domain. Asp395 (proton donor) is an active-site residue. His428 is a catalytic residue.

This sequence belongs to the glycosyl hydrolase 28 family.

Its subcellular location is the secreted. It carries out the reaction [(1-&gt;4)-alpha-D-galacturonosyl](n) + H2O = alpha-D-galacturonosyl-(1-&gt;4)-D-galacturonate + [(1-&gt;4)-alpha-D-galacturonosyl](n-2). Its function is as follows. Contributes significantly to bacterial utilization of polygalacturonate and the induction of pectate lyase in the presence of extracellular pectic polymers. In Dickeya chrysanthemi (Pectobacterium chrysanthemi), this protein is Exo-poly-alpha-D-galacturonosidase (pehX).